The sequence spans 586 residues: CTP synthase (586 aa).

The segment at 1–278 (MRKHPQTATK…DAFVVRRLNL (278 aa)) is amidoligase domain. Ser-20 contacts CTP. Ser-20 serves as a coordination point for UTP. ATP-binding positions include 21 to 26 (SLGKGL) and Asp-78. The Mg(2+) site is built by Asp-78 and Glu-152. Residues 159–161 (DIE), 199–204 (KTKPTQ), and Lys-235 contribute to the CTP site. UTP is bound by residues 199-204 (KTKPTQ) and Lys-235. The Glutamine amidotransferase type-1 domain maps to 303 to 551 (RIALVGKYVE…VGAAIDYKAG (249 aa)). An L-glutamine-binding site is contributed by Gly-366. Cys-393 serves as the catalytic Nucleophile; for glutamine hydrolysis. L-glutamine contacts are provided by residues 394–397 (LGLQ), Glu-416, and Arg-477. Catalysis depends on residues His-524 and Glu-526. Positions 560–586 (EIPEHTPNGSSHRDGVGQPLPEPASRG) are disordered.

It belongs to the CTP synthase family. In terms of assembly, homotetramer.

It catalyses the reaction UTP + L-glutamine + ATP + H2O = CTP + L-glutamate + ADP + phosphate + 2 H(+). The catalysed reaction is L-glutamine + H2O = L-glutamate + NH4(+). The enzyme catalyses UTP + NH4(+) + ATP = CTP + ADP + phosphate + 2 H(+). Its pathway is pyrimidine metabolism; CTP biosynthesis via de novo pathway; CTP from UDP: step 2/2. Its activity is regulated as follows. Allosterically activated by GTP, when glutamine is the substrate; GTP has no effect on the reaction when ammonia is the substrate. The allosteric effector GTP functions by stabilizing the protein conformation that binds the tetrahedral intermediate(s) formed during glutamine hydrolysis. Inhibited by the product CTP, via allosteric rather than competitive inhibition. Catalyzes the ATP-dependent amination of UTP to CTP with either L-glutamine or ammonia as the source of nitrogen. Regulates intracellular CTP levels through interactions with the four ribonucleotide triphosphates. The sequence is that of CTP synthase from Mycobacterium tuberculosis (strain ATCC 25177 / H37Ra).